The following is a 337-amino-acid chain: Large ribosomal subunit protein uL3 (337 aa).

Residues 1 to 26 are disordered; sequence MTRHHQPRKGSVAFSPRKRVARETPR.

This sequence belongs to the universal ribosomal protein uL3 family. Part of the 50S ribosomal subunit. Forms a cluster with proteins L14 and L24e.

One of the primary rRNA binding proteins, it binds directly near the 3'-end of the 23S rRNA, where it nucleates assembly of the 50S subunit. The sequence is that of Large ribosomal subunit protein uL3 from Methanosphaera stadtmanae (strain ATCC 43021 / DSM 3091 / JCM 11832 / MCB-3).